The following is a 376-amino-acid chain: Putative transcription factor egl-18 (376 aa).

Disordered regions lie at residues 1 to 33 (MSIS…CSGC), 65 to 122 (NNEL…LPDF), 148 to 197 (MVQQ…SDIP), and 240 to 264 (ATPS…PNAA). Positions 9 to 27 (TRPESAEQQHHEVLQRPSD) are enriched in basic and acidic residues. Low complexity-rich tracts occupy residues 68–89 (LKSS…RSSP) and 165–175 (QQSVSPPQSKS). Basic and acidic residues predominate over residues 176–195 (VKIEDPMDQDVKQEESERSD). The span at 241 to 250 (TPSSQSQDSS) shows a compositional bias: polar residues. The segment at 266 to 290 (CSNCRTDKTTAWRRDAEGKLVCNPC) adopts a GATA-type zinc-finger fold.

As to expression, expressed in differentiated seam cells. Expressed in the head and trunk.

It localises to the nucleus. Functionally, probable transcription factor. Involved in embryonic development and in vulval development in larvae, acting redundantly, at least in part, with elt-6. Perhaps acting together with elt-6, may form a positive feedback loop to initiate and maintain lin-39 gene expression to ensure proper vulval precursor cell (VPC) fate specification. Together with elt-6, acts as a downstream target of the Wnt/beta-catenin asymmetry pathway, required to adopt or maintain the seam cell fate. Required in seam cells, acting redundantly with elt-6, to promote production of alae, expression of several seam-specific genes and maintenance of seam cells in an unfused state. Plays a role in longevity. May form a transcriptional circuit with GATA factors elt-3 and elt-6. This Caenorhabditis elegans protein is Putative transcription factor egl-18.